We begin with the raw amino-acid sequence, 131 residues long: MTMIAWMQHFLETDETKLIYWLTFLMVCMVVDTVLGVLFAKLNPNIKFSSFKIKTGVLIKVSEMILALLAVPFAVPFPAGLPLLYTVYTALCVSEIYSIFGHLRLVDDKSDFLEILENFFKRTSGKNKEDK.

Over 1-15 (MTMIAWMQHFLETDE) the chain is Periplasmic. Cytoplasmic loops occupy residues 1–52 (MTMI…SSFK) and 39–50 (FAKLNPNIKFSS). A helical transmembrane segment spans residues 16–38 (TKLIYWLTFLMVCMVVDTVLGVL). The helical transmembrane segment at 53–75 (IKTGVLIKVSEMILALLAVPFAV) threads the bilayer. At 76–78 (PFP) the chain is on the periplasmic side. Residues 79 to 101 (AGLPLLYTVYTALCVSEIYSIFG) form a helical membrane-spanning segment. The Cytoplasmic portion of the chain corresponds to 102 to 131 (HLRLVDDKSDFLEILENFFKRTSGKNKEDK).

This sequence belongs to the bacteriophage holin family. phi29likevirus holin subfamily. As to quaternary structure, homomultimer. Interacts with isoform Antiholin; this interaction blocks the holin homomultimerization and delays host cell lysis.

Its subcellular location is the host cell inner membrane. Its function is as follows. Accumulates harmlessly in the cytoplasmic membrane until it reaches a critical concentration that triggers the formation of micron-scale pores (holes) causing host cell membrane disruption and endolysin escape into the periplasmic space. Determines the precise timing of host cell lysis. Participates with the endolysin and spanin proteins in the sequential events which lead to the programmed host cell lysis releasing the mature viral particles from the host cell. Counteracts the aggregation of the holin molecules and thus of pore formation. This chain is Antiholin (14), found in Bacillus subtilis (Bacteriophage PZA).